The primary structure comprises 353 residues: Outer membrane protein A (353 aa).

Residues 1-21 (MKKTAIALAVALVGFATVAQA) form the signal peptide. Beta stranded transmembrane passes span 27 to 37 (TWYTGGKLGWS), 56 to 67 (QLGAGAFFGYQA), 71 to 79 (LGFEMGYDW), 97 to 108 (QGVQLAAKLSYP), 113 to 121 (LDVYTRLGG), 148 to 157 (PLVALGAEYA), 162 to 169 (WATRMEYQ), and 188 to 196 (LLSVGVSYR). Repeat copies occupy residues 208 to 209 (AP), 210 to 211 (TP), 212 to 213 (AP), and 214 to 215 (AP). The tract at residues 208–215 (APTPAPAP) is 4 X 2 AA approximate tandem repeats of A-P. The OmpA-like domain maps to 217–345 (VDTKRFTLKS…RVEIEVKGYK (129 aa)). Cys-318 and Cys-330 are oxidised to a cystine.

This sequence belongs to the outer membrane OOP (TC 1.B.6) superfamily. OmpA family. Monomer and homodimer.

It is found in the cell outer membrane. Its function is as follows. With TolR probably plays a role in maintaining the position of the peptidoglycan cell wall in the periplasm. Acts as a porin with low permeability that allows slow penetration of small solutes; an internal gate slows down solute passage. This is Outer membrane protein A from Yersinia pseudotuberculosis serotype I (strain IP32953).